A 359-amino-acid polypeptide reads, in one-letter code: Ribosome biogenesis protein BRX1 homolog (359 aa).

The segment covering 1–12 (MGRKFQNKKKKA) has biased composition (basic residues). Residues 1–42 (MGRKFQNKKKKAAPQLEIVPLDENPPLPPQRSSDDVVPKKAR) form a disordered region. Residues 50-241 (QRVLVFSARG…PVKIFDGSFT (192 aa)) enclose the Brix domain.

This sequence belongs to the BRX1 family.

It localises to the nucleus. It is found in the nucleolus. Its function is as follows. Required for biogenesis of the 60S ribosomal subunit. In Drosophila melanogaster (Fruit fly), this protein is Ribosome biogenesis protein BRX1 homolog.